The primary structure comprises 622 residues: Iron transport multicopper oxidase fio1 (622 aa).

The signal sequence occupies residues M1–A22. The Extracellular segment spans residues K23–K553. 2 N-linked (GlcNAc...) asparagine glycosylation sites follow: N30 and N79. 2 consecutive Plastocyanin-like domains span residues I49–N147 and T194–N304. Residues H85 and H87 each contribute to the Cu cation site. N-linked (GlcNAc...) asparagine glycosylation is found at N117 and N123. Cu cation-binding residues include H129 and H131. Residues N198, N202, N234, N269, N296, N338, N360, and N376 are each glycosylated (N-linked (GlcNAc...) asparagine). Residues E386 to A498 enclose the Plastocyanin-like 3 domain. Cu cation is bound by residues H417, H420, H422, H480, C481, H482, and H486. An N-linked (GlcNAc...) asparagine glycan is attached at N532. Residues A554–F574 traverse the membrane as a helical segment. Topologically, residues Y575 to K622 are cytoplasmic.

The protein belongs to the multicopper oxidase family. The cofactor is Cu cation.

Its subcellular location is the cell membrane. Its function is as follows. Could be an iron transport multicopper oxidase, which is required for Fe(2+) high affinity uptake. May be required to oxidize Fe(2+) and release it from the transporter. Essential component of copper-dependent iron transport. The sequence is that of Iron transport multicopper oxidase fio1 (fio1) from Schizosaccharomyces pombe (strain 972 / ATCC 24843) (Fission yeast).